The following is a 205-amino-acid chain: MIVQRLLNQLIAQDIRDFRVLAAIAKVPRQLFVDEAMAHKAWDNTALPIGNGQTISQPYMVARMTELLIQNDPAHVLEIGTGSGYQTAVLAHLVEHVYTVERIKSLQFQARRRLRQLDLHNVSAKHGNGWLGWPNKGPFDAILVTAAASEVPTALTDQLADGGRLVLPVGDSHQTLQLIERAGSQLTSRILEPVRFVPLIDGDVE.

The active site involves Ser56.

The protein belongs to the methyltransferase superfamily. L-isoaspartyl/D-aspartyl protein methyltransferase family.

It localises to the cytoplasm. It catalyses the reaction [protein]-L-isoaspartate + S-adenosyl-L-methionine = [protein]-L-isoaspartate alpha-methyl ester + S-adenosyl-L-homocysteine. Catalyzes the methyl esterification of L-isoaspartyl residues in peptides and proteins that result from spontaneous decomposition of normal L-aspartyl and L-asparaginyl residues. It plays a role in the repair and/or degradation of damaged proteins. The sequence is that of Protein-L-isoaspartate O-methyltransferase from Aeromonas salmonicida (strain A449).